We begin with the raw amino-acid sequence, 432 residues long: Enolase (432 aa).

A (2R)-2-phosphoglycerate-binding site is contributed by Gln-164. The active-site Proton donor is Glu-206. The Mg(2+) site is built by Asp-243, Glu-289, and Asp-316. 4 residues coordinate (2R)-2-phosphoglycerate: Lys-341, Arg-370, Ser-371, and Lys-392. The Proton acceptor role is filled by Lys-341.

The protein belongs to the enolase family. It depends on Mg(2+) as a cofactor.

Its subcellular location is the cytoplasm. It is found in the secreted. The protein resides in the cell surface. It catalyses the reaction (2R)-2-phosphoglycerate = phosphoenolpyruvate + H2O. Its pathway is carbohydrate degradation; glycolysis; pyruvate from D-glyceraldehyde 3-phosphate: step 4/5. Its function is as follows. Catalyzes the reversible conversion of 2-phosphoglycerate (2-PG) into phosphoenolpyruvate (PEP). It is essential for the degradation of carbohydrates via glycolysis. This chain is Enolase, found in Borrelia duttonii (strain Ly).